We begin with the raw amino-acid sequence, 667 residues long: Cyclin-dependent kinase 17 (667 aa).

2 disordered regions span residues 1–70 and 85–184; these read MTAY…SSLN and DSEY…LRKM. 2 stretches are compositionally biased toward acidic residues: residues 99-111 and 119-144; these read EDFDEEEEDEFED and DEDDVEYEDEDDEDDIVVEEEEITPE. The span at 151 to 164 shows a compositional bias: polar residues; the sequence is TGVTTQTTPPSNNT. In terms of domain architecture, Protein kinase spans 328–609; sequence YEKLDKLGEG…AAEAVKHPFL (282 aa). Residues 334 to 342 and K357 each bind ATP; that span reads LGEGTYATV. Catalysis depends on D449, which acts as the Proton acceptor. Mg(2+)-binding residues include N454 and D467. Positions 642–667 are disordered; that stretch reads HHHSSRRHHRGTLVKDKYRMHSSHHT. Basic residues predominate over residues 644–653; the sequence is HSSRRHHRGT.

Belongs to the protein kinase superfamily. CMGC Ser/Thr protein kinase family. CDC2/CDKX subfamily. As to quaternary structure, interacts with cyy-1; the interaction is required to activate pct-1. Mg(2+) serves as cofactor.

The protein resides in the cytoplasm. Its subcellular location is the cell projection. The protein localises to the dendrite. It is found in the axon. It catalyses the reaction L-seryl-[protein] + ATP = O-phospho-L-seryl-[protein] + ADP + H(+). It carries out the reaction L-threonyl-[protein] + ATP = O-phospho-L-threonyl-[protein] + ADP + H(+). Its function is as follows. Serine/threonine-protein kinase, which, in association with cyy-1, regulates the trafficking of synaptic vesicles in the DA9 motor neuron and probably also in the DD motor neurons and in RIA interneurons. In terms of biological role, sufficient for synaptic vesicle trafficking in the DA9 motor neuron. The protein is Cyclin-dependent kinase 17 of Caenorhabditis elegans.